The primary structure comprises 222 residues: V-type ATP synthase subunit D (222 aa).

This sequence belongs to the V-ATPase D subunit family.

In terms of biological role, produces ATP from ADP in the presence of a proton gradient across the membrane. The sequence is that of V-type ATP synthase subunit D from Acetivibrio thermocellus (strain ATCC 27405 / DSM 1237 / JCM 9322 / NBRC 103400 / NCIMB 10682 / NRRL B-4536 / VPI 7372) (Clostridium thermocellum).